The following is a 322-amino-acid chain: Thioredoxin reductase (322 aa).

FAD-binding positions include 12 to 15 (SGPA), 34 to 42 (EGAVTAGGA), N51, and V84. A disulfide bond links C136 and C139. Residues H176, R182, I239, and Y259 each contribute to the NADP(+) site. FAD contacts are provided by residues D279 and 286–289 (RQAI). R286 contributes to the NADP(+) binding site.

Belongs to the class-II pyridine nucleotide-disulfide oxidoreductase family. In terms of assembly, homodimer. FAD serves as cofactor.

The protein resides in the cytoplasm. The enzyme catalyses [thioredoxin]-dithiol + NADP(+) = [thioredoxin]-disulfide + NADPH + H(+). This chain is Thioredoxin reductase, found in Streptomyces coelicolor (strain ATCC BAA-471 / A3(2) / M145).